A 567-amino-acid polypeptide reads, in one-letter code: Geranylgeranyl transferase type-2 subunit alpha (567 aa).

6 PFTA repeats span residues 44–78 (LDES…QLET), 88–122 (LVKA…RLPE), 124–158 (NWTR…QAAV), 159–193 (PPAE…QLHP), 207–241 (VLLK…RADP), and 363–397 (VLQS…ALDP). At Ser98 the chain carries Phosphoserine. 5 LRR repeats span residues 442-463 (EVRV…EQLL), 464-486 (LVTH…AALR), 487-508 (CLEV…TNLP), 509-530 (RLQE…QPLA), and 534-555 (RLVL…LEQL).

This sequence belongs to the protein prenyltransferase subunit alpha family. Heterotrimer composed of RABGGTA, RABGGTB and CHM; within this trimer, RABGGTA and RABGGTB form the catalytic component B, while CHM (component A) mediates peptide substrate binding. The Rab GGTase dimer (RGGT) interacts with CHM (component A) prior to Rab protein binding; the association is stabilized by geranylgeranyl pyrophosphate (GGpp). The CHM:RGGT:Rab complex is destabilized by GGpp. Interacts with non-phosphorylated form of RAB8A; phosphorylation of RAB8A at 'Thr-72' disrupts this interaction.

The enzyme catalyses geranylgeranyl diphosphate + L-cysteinyl-[protein] = S-geranylgeranyl-L-cysteinyl-[protein] + diphosphate. Its activity is regulated as follows. The enzymatic reaction requires the aid of a Rab escort protein (also called component A), such as CHM. Its function is as follows. Catalyzes the transfer of a geranylgeranyl moiety from geranylgeranyl diphosphate to both cysteines of Rab proteins with the C-terminal sequence -XXCC, -XCXC and -CCXX, such as RAB1A, RAB3A, RAB5A and RAB7A. In Pongo abelii (Sumatran orangutan), this protein is Geranylgeranyl transferase type-2 subunit alpha (RABGGTA).